A 239-amino-acid polypeptide reads, in one-letter code: Type III pantothenate kinase (239 aa).

Asp-6–Lys-13 serves as a coordination point for ATP. Substrate is bound by residues Tyr-87 and Gly-94–Arg-97. Asp-96 acts as the Proton acceptor in catalysis. Thr-119 lines the ATP pocket. Position 169 (Ser-169) interacts with substrate.

It belongs to the type III pantothenate kinase family. Homodimer. Requires NH4(+) as cofactor. The cofactor is K(+).

It localises to the cytoplasm. The catalysed reaction is (R)-pantothenate + ATP = (R)-4'-phosphopantothenate + ADP + H(+). It functions in the pathway cofactor biosynthesis; coenzyme A biosynthesis; CoA from (R)-pantothenate: step 1/5. Its function is as follows. Catalyzes the phosphorylation of pantothenate (Pan), the first step in CoA biosynthesis. The sequence is that of Type III pantothenate kinase from Laribacter hongkongensis (strain HLHK9).